A 99-amino-acid chain; its full sequence is Plastocyanin (99 aa).

The 99-residue stretch at 1-99 (IEILLGGDDG…AGMVGKVTVN (99 aa)) folds into the Plastocyanin-like domain. Cu cation-binding residues include H37, C84, H87, and M92.

Belongs to the plastocyanin family. Cu(2+) serves as cofactor.

Its subcellular location is the plastid. The protein resides in the chloroplast thylakoid membrane. In terms of biological role, participates in electron transfer between P700 and the cytochrome b6-f complex in photosystem I. The polypeptide is Plastocyanin (PETE) (Cucumis sativus (Cucumber)).